Here is a 262-residue protein sequence, read N- to C-terminus: tRNA (guanine-N(7)-)-methyltransferase (262 aa).

The interval 1-58 (MLPQDTNTDPLPGDDAESASGKSADASQGTPNPGDEVAHPRRIRSFVRRAGRTSTGQQ) is disordered. Residues 40-51 (PRRIRSFVRRAG) are compositionally biased toward basic residues. Glutamate 92, glutamate 117, aspartate 144, and aspartate 167 together coordinate S-adenosyl-L-methionine. The active site involves aspartate 167. Substrate is bound at residue lysine 171. The interval 173-178 (RHNKRR) is interaction with RNA. Residues aspartate 203 and 241-244 (TKFE) contribute to the substrate site.

It belongs to the class I-like SAM-binding methyltransferase superfamily. TrmB family.

The catalysed reaction is guanosine(46) in tRNA + S-adenosyl-L-methionine = N(7)-methylguanosine(46) in tRNA + S-adenosyl-L-homocysteine. Its pathway is tRNA modification; N(7)-methylguanine-tRNA biosynthesis. Catalyzes the formation of N(7)-methylguanine at position 46 (m7G46) in tRNA. This Cupriavidus metallidurans (strain ATCC 43123 / DSM 2839 / NBRC 102507 / CH34) (Ralstonia metallidurans) protein is tRNA (guanine-N(7)-)-methyltransferase.